The chain runs to 224 residues: MPRPGSAQRWAAVAGRWGCRLLALLLLVPGPGGASEITFELPDNAKQCFYEDIAQGTKCTLEFQVITGGHYDVDCRLEDPDGKVLYKEMKKQYDSFTFTASKNGTYKFCFSNEFSTFTHKTVYFDFQVGEDPPLFPSENRVSALTQMESACVSIHEALKSVIDYQTHFRLREAQGRSRAEDLNTRVAYWSVGEALILLVVSIGQVFLLKSFFSDKRTTTTRVGS.

The first 34 residues, 1 to 34 (MPRPGSAQRWAAVAGRWGCRLLALLLLVPGPGGA), serve as a signal peptide directing secretion. Residues 35 to 187 (SEITFELPDN…RAEDLNTRVA (153 aa)) lie on the Lumenal side of the membrane. The GOLD domain maps to 46-128 (KQCFYEDIAQ…HKTVYFDFQV (83 aa)). N103 is a glycosylation site (N-linked (GlcNAc...) asparagine). A helical membrane pass occupies residues 188-208 (YWSVGEALILLVVSIGQVFLL). The Cytoplasmic segment spans residues 209–224 (KSFFSDKRTTTTRVGS). Positions 211–212 (FF) match the COPII vesicle coat-binding motif. Positions 211–224 (FFSDKRTTTTRVGS) match the COPI vesicle coat-binding motif.

Belongs to the EMP24/GP25L family. As to quaternary structure, predominantly monomeric and to lesser extent homodimeric in endoplasmic reticulum, endoplasmic reticulum-Golgi intermediate compartment and cis-Golgi network. Oligomerizes with other members of the EMP24/GP25L family such as TMED2, TMED9 and TMED10. Interacts (via C-terminus) with COPG1; the interaction involves dimeric TMED7. In terms of processing, N-linked glycosylated in complex form containing terminal sialic acid.

It localises to the endoplasmic reticulum membrane. Its subcellular location is the golgi apparatus. It is found in the cis-Golgi network membrane. The protein resides in the endoplasmic reticulum-Golgi intermediate compartment membrane. The protein localises to the cytoplasmic vesicle. It localises to the COPI-coated vesicle membrane. Its subcellular location is the COPII-coated vesicle membrane. Functionally, potential role in vesicular protein trafficking, mainly in the early secretory pathway. Appears to play a role in the biosynthesis of secreted cargo including processing and post-translational modifications. The chain is Transmembrane emp24 domain-containing protein 7 (TMED7) from Homo sapiens (Human).